Reading from the N-terminus, the 120-residue chain is NAD(P)H-quinone oxidoreductase subunit 3, chloroplastic (120 aa).

Helical transmembrane passes span 7-27, 64-84, and 88-108; these read YETF…AFLI, MFAL…PWAM, and ILGI…IVGS.

The protein belongs to the complex I subunit 3 family. In terms of assembly, NDH is composed of at least 16 different subunits, 5 of which are encoded in the nucleus.

The protein resides in the plastid. It localises to the chloroplast thylakoid membrane. It carries out the reaction a plastoquinone + NADH + (n+1) H(+)(in) = a plastoquinol + NAD(+) + n H(+)(out). The catalysed reaction is a plastoquinone + NADPH + (n+1) H(+)(in) = a plastoquinol + NADP(+) + n H(+)(out). In terms of biological role, NDH shuttles electrons from NAD(P)H:plastoquinone, via FMN and iron-sulfur (Fe-S) centers, to quinones in the photosynthetic chain and possibly in a chloroplast respiratory chain. The immediate electron acceptor for the enzyme in this species is believed to be plastoquinone. Couples the redox reaction to proton translocation, and thus conserves the redox energy in a proton gradient. This Cycas taitungensis (Prince sago) protein is NAD(P)H-quinone oxidoreductase subunit 3, chloroplastic.